Reading from the N-terminus, the 63-residue chain is Cysteine-rich venom protein 3 (63 aa).

The N-terminal stretch at 1–25 (MRKPITLILVVALALVLLATSEVSA) is a signal peptide. Disulfide bonds link Cys-29–Cys-43, Cys-36–Cys-48, and Cys-42–Cys-58.

As to expression, expressed by the venom gland.

Its subcellular location is the secreted. This is Cysteine-rich venom protein 3 from Pimpla hypochondriaca (Parasitoid wasp).